The primary structure comprises 237 residues: Ribosomal RNA small subunit methyltransferase G (237 aa).

Residues glycine 78, phenylalanine 83, 129 to 130 (AE), and arginine 148 contribute to the S-adenosyl-L-methionine site. The interval 216 to 237 (SKKKETPNKYPRKAGTPNKKPL) is disordered.

The protein belongs to the methyltransferase superfamily. RNA methyltransferase RsmG family.

The protein resides in the cytoplasm. Specifically methylates the N7 position of a guanine in 16S rRNA. The chain is Ribosomal RNA small subunit methyltransferase G from Streptococcus agalactiae serotype Ia (strain ATCC 27591 / A909 / CDC SS700).